The chain runs to 105 residues: Nucleoid-associated protein Sca_0120 (105 aa).

Residues 1 to 36 (MRGGGNMQQMMKQMQKMQKKMAEEQEKLKDEKVEGS) form a disordered region. Low complexity predominate over residues 7 to 16 (MQQMMKQMQK). The segment covering 20-34 (KMAEEQEKLKDEKVE) has biased composition (basic and acidic residues).

It belongs to the YbaB/EbfC family. As to quaternary structure, homodimer.

The protein localises to the cytoplasm. It localises to the nucleoid. Binds to DNA and alters its conformation. May be involved in regulation of gene expression, nucleoid organization and DNA protection. This Staphylococcus carnosus (strain TM300) protein is Nucleoid-associated protein Sca_0120.